The following is a 286-amino-acid chain: 2-hydroxy-6-oxo-6-phenylhexa-2,4-dienoate hydrolase (286 aa).

Residues 42-43 (GG), Asn51, Asn111, Thr180, and Arg190 each bind substrate. The active-site Proton acceptor is His265. Trp266 is a binding site for substrate.

Belongs to the AB hydrolase superfamily. BphD family. In terms of assembly, homodimer.

It catalyses the reaction 2,6-dioxo-6-phenylhexa-3-enoate + H2O = 2-oxopent-4-enoate + benzoate + H(+). It participates in xenobiotic degradation; biphenyl degradation; 2-hydroxy-2,4-pentadienoate and benzoate from biphenyl: step 4/4. In terms of biological role, catalyzes an unusual C-C bond hydrolysis of 2-hydroxy-6-oxo-6-phenylhexa-2,4-dienoic acid (HOPDA) to produce benzoic acid and 2-hydroxy-2,4-pentadienoic acid (HPD). The polypeptide is 2-hydroxy-6-oxo-6-phenylhexa-2,4-dienoate hydrolase (Comamonas testosteroni (Pseudomonas testosteroni)).